We begin with the raw amino-acid sequence, 607 residues long: Isocitrate dehydrogenase kinase/phosphatase (607 aa).

ATP is bound by residues 328-334 and K349; that span reads APGIKGL. D384 is an active-site residue.

Belongs to the AceK family.

It is found in the cytoplasm. It catalyses the reaction L-seryl-[isocitrate dehydrogenase] + ATP = O-phospho-L-seryl-[isocitrate dehydrogenase] + ADP + H(+). Bifunctional enzyme which can phosphorylate or dephosphorylate isocitrate dehydrogenase (IDH) on a specific serine residue. This is a regulatory mechanism which enables bacteria to bypass the Krebs cycle via the glyoxylate shunt in response to the source of carbon. When bacteria are grown on glucose, IDH is fully active and unphosphorylated, but when grown on acetate or ethanol, the activity of IDH declines drastically concomitant with its phosphorylation. The chain is Isocitrate dehydrogenase kinase/phosphatase from Cupriavidus metallidurans (strain ATCC 43123 / DSM 2839 / NBRC 102507 / CH34) (Ralstonia metallidurans).